A 597-amino-acid polypeptide reads, in one-letter code: Putative heat shock protein HSP 90-beta-3 (597 aa).

ATP-binding residues include Asn46, Asp88, and Lys107. Residues 201–241 are disordered; it reads DKEISDDEAEEEKGEKEEEDKDDEEKPKIKDVGSDEEDDSK. Residues 204–223 show a composition bias toward acidic residues; it reads ISDDEAEEEKGEKEEEDKDD. Over residues 224–233 the composition is skewed to basic and acidic residues; sequence EEKPKIKDVG. Arg334 contacts ATP. Residues 414 to 446 are a coiled coil; that stretch reads LELPEDEEEKKKMEESKEKFENLCKLMKEILDK. Residues 564 to 578 show a composition bias toward acidic residues; sequence DEDEVAAEEPSDAVP. The disordered stretch occupies residues 564-597; it reads DEDEVAAEEPSDAVPDEIPPLEGDEDASRMEEVD. The TPR repeat-binding signature appears at 593–597; the sequence is MEEVD.

The protein belongs to the heat shock protein 90 family. Homodimer.

It is found in the cytoplasm. Its function is as follows. Putative molecular chaperone that may promote the maturation, structural maintenance and proper regulation of specific target proteins. This is Putative heat shock protein HSP 90-beta-3 (HSP90AB3P) from Homo sapiens (Human).